Reading from the N-terminus, the 255-residue chain is MSLLQDIVLIITGSASGIGLATATAALSQGAKILGVDVSWAPVSLTEHASYKFIQANLTHEATPKQVVETCIKEFGRIDGLLNIAGIMDQNSSVDSLTDDMWERCIAINLTAPVKLMREVIPIMRQQKSGSIVNVGSKAATSGAASGVAYTASKHGLMGATKNVAWRYKQEGIRCNAVCPGGVPTGIVQASDPTTWDKDALATMSHIHQAHAADRQEGLGVEAEDIANCLLFLVSSQSKRINGAIIPVDNAWSVI.

I11, R118, Y150, K154, and V183 together coordinate NADP(+). Y150 serves as the catalytic Proton acceptor. K154 acts as the Lowers pKa of active site Tyr in catalysis.

The protein belongs to the short-chain dehydrogenases/reductases (SDR) family.

It functions in the pathway secondary metabolite biosynthesis; terpenoid biosynthesis. Functionally, short chain dehydrogenase; part of the gene cluster that mediates the biosynthesis of andrastins, meroterpenoid compounds that exhibit inhibitory activity against ras farnesyltransferase, suggesting that they could be promising leads for antitumor agents. The first step of the pathway is the synthesis of 3,5-dimethylorsellinic acid (DMOA) by the polyketide synthase adrD via condensation of one acetyl-CoA starter unit with 3 malonyl-CoA units and 2 methylations. DMAO is then converted to farnesyl-DMAO by the prenyltransferase adrG. The methyltransferase adrK catalyzes the methylation of the carboxyl group of farnesyl-DMAO to farnesyl-DMAO methyl ester which is further converted to epoxyfarnesyl-DMAO methyl ester by the FAD-dependent monooxygenase adrH. The terpene cyclase adrI then catalyzes the carbon skeletal rearrangement to generate the andrastin E, the first compound in the pathway having the andrastin scaffold, with the tetracyclic ring system. The post-cyclization tailoring enzymes adrF, adrE, adrJ, and adrA, are involved in the conversion of andrastin E into andrastin A. The short chain dehydrogenase adrF is responsible for the oxidation of the C-3 a hydroxyl group of andrastin E to yield the corresponding ketone, andrastin D. The ketoreductase adrE stereoselectively reduces the carbonyl moiety to reverse the stereochemistry of the C-3 position to yield andrastin F. The acetyltransferase adrJ is the acetyltransferase that attaches the acetyl group to the C-3 hydroxyl group of andrastin F to yield andrastin C. Finally, the cytochrome P450 monooxygenase adrA catalyzes two sequential oxidation reactions of the C-23 methyl group, to generate the corresponding alcohol andrastin B, and aldehyde andrastin A. This Penicillium rubens (strain ATCC 28089 / DSM 1075 / NRRL 1951 / Wisconsin 54-1255) (Penicillium chrysogenum) protein is Short chain dehydrogenase adrF.